A 233-amino-acid chain; its full sequence is Clathrin light chain (233 aa).

A disordered region spans residues 1–124; it reads MSEKFPPLED…EDRSEVVDQW (124 aa). A compositionally biased stretch (basic and acidic residues) spans 17–43; the sequence is PNDKKDDDTDFLKREAEILGDEFKTEQ. Position 49 is a phosphothreonine (threonine 49). Serine 52 is modified (phosphoserine). The segment covering 56–67 has biased composition (acidic residues); it reads DDDEIRDFEEQF. A compositionally biased stretch (polar residues) spans 69-92; that stretch reads DINSANGAVSSDQNGSATVSSGND. Basic and acidic residues predominate over residues 112–124; that stretch reads SVKEDRSEVVDQW. Residues 125 to 186 adopt a coiled-coil conformation; sequence KQRRAVEIHE…EAFLKKRDEF (62 aa). Residues 144 to 204 form an involved in binding clathrin heavy chain region; the sequence is KELQDEAIKH…DRALQLINQD (61 aa).

This sequence belongs to the clathrin light chain family. In terms of assembly, clathrin coats are formed from molecules containing 3 heavy chains and 3 light chains. Interacts with the auxilin-like clathrin uncoating factor SWA2.

It is found in the cytoplasmic vesicle membrane. Its subcellular location is the membrane. The protein localises to the coated pit. In terms of biological role, clathrin is the major protein of the polyhedral coat of coated pits and vesicles. In yeast, it is involved in the retention of proteins in an intracellular membrane compartment, presumably the trans-Golgi. The yeast light chain is important for cell growth. The light chain may help to properly orient the assembly/ disassembly of the clathrin coats. This Saccharomyces cerevisiae (strain ATCC 204508 / S288c) (Baker's yeast) protein is Clathrin light chain (CLC1).